We begin with the raw amino-acid sequence, 201 residues long: Oligoribonuclease (201 aa).

The Exonuclease domain maps to 20 to 183 (LVWLDMEMTG…ADIHESIDEL (164 aa)). Tyr-141 is an active-site residue.

This sequence belongs to the oligoribonuclease family.

It is found in the cytoplasm. 3'-to-5' exoribonuclease specific for small oligoribonucleotides. The chain is Oligoribonuclease from Burkholderia mallei (strain NCTC 10229).